Reading from the N-terminus, the 318-residue chain is Very-long-chain 3-oxoacyl-CoA reductase-A (318 aa).

The helical transmembrane segment at 15–35 threads the bilayer; it reads FWYLGVLAAAWWGLRAACCLL. 54–83 serves as a coordination point for NADP(+); sequence GKWAVVTGATDGIGKAYAEELARRGMSIVL. Helical transmembrane passes span 187–207 and 281–301; these read GVIL…LTVY and AIMG…SMGM. Residue serine 194 participates in substrate binding. Catalysis depends on tyrosine 207, which acts as the Proton acceptor.

The protein belongs to the short-chain dehydrogenases/reductases (SDR) family. 17-beta-HSD 3 subfamily.

The protein resides in the endoplasmic reticulum membrane. The catalysed reaction is a very-long-chain (3R)-3-hydroxyacyl-CoA + NADP(+) = a very-long-chain 3-oxoacyl-CoA + NADPH + H(+). It catalyses the reaction 17beta-estradiol + NAD(+) = estrone + NADH + H(+). The enzyme catalyses 17beta-estradiol + NADP(+) = estrone + NADPH + H(+). It functions in the pathway lipid metabolism; fatty acid biosynthesis. The protein operates within steroid biosynthesis; estrogen biosynthesis. Functionally, catalyzes the second of the four reactions of the long-chain fatty acids elongation cycle. This endoplasmic reticulum-bound enzymatic process, allows the addition of two carbons to the chain of long- and very long-chain fatty acids/VLCFAs per cycle. This enzyme has a 3-ketoacyl-CoA reductase activity, reducing 3-ketoacyl-CoA to 3-hydroxyacyl-CoA, within each cycle of fatty acid elongation. Thereby, it may participate in the production of VLCFAs of different chain lengths that are involved in multiple biological processes as precursors of membrane lipids and lipid mediators. May also catalyze the transformation of estrone (E1) into estradiol (E2) and play a role in estrogen formation. This is Very-long-chain 3-oxoacyl-CoA reductase-A (hsd17b12-a) from Xenopus laevis (African clawed frog).